The chain runs to 190 residues: Potassium-transporting ATPase KdpC subunit (190 aa).

A helical membrane pass occupies residues 10–30 (TFIFLLLITGGVYPLLTTALG).

It belongs to the KdpC family. The system is composed of three essential subunits: KdpA, KdpB and KdpC.

The protein resides in the cell inner membrane. In terms of biological role, part of the high-affinity ATP-driven potassium transport (or Kdp) system, which catalyzes the hydrolysis of ATP coupled with the electrogenic transport of potassium into the cytoplasm. This subunit acts as a catalytic chaperone that increases the ATP-binding affinity of the ATP-hydrolyzing subunit KdpB by the formation of a transient KdpB/KdpC/ATP ternary complex. The sequence is that of Potassium-transporting ATPase KdpC subunit from Escherichia coli O9:H4 (strain HS).